The primary structure comprises 484 residues: NADH-quinone oxidoreductase subunit N (484 aa).

The next 14 membrane-spanning stretches (helical) occupy residues 11-31 (SLWI…VLLI), 42-62 (VTYY…FNLI), 79-98 (MASV…MVYS), 113-133 (FVLV…YSLL), 134-154 (TLYL…AIAR), 167-187 (FVLG…IYGI), 211-231 (LIIN…LGAV), 248-268 (VTLF…VRIL), 279-299 (WSDL…VVAL), 313-333 (ISHV…GYGA), 335-355 (AFYM…IILL), 378-398 (FALM…LVGF), 408-428 (VVSA…VISA), and 457-477 (LVLS…DFWM).

It belongs to the complex I subunit 2 family. In terms of assembly, NDH-1 is composed of 14 different subunits. Subunits NuoA, H, J, K, L, M, N constitute the membrane sector of the complex.

Its subcellular location is the cell inner membrane. The catalysed reaction is a quinone + NADH + 5 H(+)(in) = a quinol + NAD(+) + 4 H(+)(out). In terms of biological role, NDH-1 shuttles electrons from NADH, via FMN and iron-sulfur (Fe-S) centers, to quinones in the respiratory chain. The immediate electron acceptor for the enzyme in this species is believed to be ubiquinone. Couples the redox reaction to proton translocation (for every two electrons transferred, four hydrogen ions are translocated across the cytoplasmic membrane), and thus conserves the redox energy in a proton gradient. In Ruthia magnifica subsp. Calyptogena magnifica, this protein is NADH-quinone oxidoreductase subunit N.